We begin with the raw amino-acid sequence, 102 residues long: Small ribosomal subunit protein uS10 (102 aa).

Belongs to the universal ribosomal protein uS10 family. As to quaternary structure, part of the 30S ribosomal subunit.

Its function is as follows. Involved in the binding of tRNA to the ribosomes. The chain is Small ribosomal subunit protein uS10 from Bartonella henselae (strain ATCC 49882 / DSM 28221 / CCUG 30454 / Houston 1) (Rochalimaea henselae).